Reading from the N-terminus, the 825-residue chain is Probable ATP-dependent RNA helicase DDX20 (825 aa).

A disordered region spans residues 27-50; it reads PVQAVEPTPASPWTQRTAHDIGGP. The short motif at 63–91 is the Q motif element; the sequence is ADFESLLLSRPVLEGLRAAGFERPSPVQL. Residues Arg-85, Gln-90, 107-114, and 110-115 each bind ATP; these read AKSGTGKT and GTGKTC. Residues 94-265 enclose the Helicase ATP-binding domain; the sequence is IPLGRCGLDL…TRYMRDPTFV (172 aa). At Ser-188 the chain carries Phosphoserine. A DEAD box motif is present at residues 212–215; it reads DEAD. Phosphoserine is present on Ser-270. Positions 300-449 constitute a Helicase C-terminal domain; that stretch reads HLQELFSKVP…PIPPGLMEEC (150 aa). Composition is skewed to polar residues over residues 465-475 and 484-504; these read SPTVATQSPKK and FQSQ…SASA. Disordered stretches follow at residues 465 to 573 and 642 to 753; these read SPTV…PGSL and QMLV…EPQE. A phosphoserine mark is found at Ser-472, Ser-501, and Ser-506. Over residues 508–518 the composition is skewed to basic residues; that stretch reads RPKHSKPKLPV. Polar residues predominate over residues 547-571; that stretch reads KNSVQTSVEDSSSNSQHQAKDSSPG. Phosphothreonine is present on Thr-552. Residues Ser-561, Ser-653, Ser-655, Ser-657, Ser-673, Ser-678, and Ser-679 each carry the phosphoserine modification. Over residues 646–668 the composition is skewed to low complexity; it reads SSSQSGDSESDSDSCSSRTSSQS. Thr-689 and Thr-706 each carry phosphothreonine. Positions 698 to 711 are enriched in polar residues; it reads EQVQNGNDTPTQVE. The segment covering 733 to 744 has biased composition (basic residues); that stretch reads KQSRRNPARRSS.

Belongs to the DEAD box helicase family. DDX20 subfamily. Part of the core SMN complex that contains SMN1, GEMIN2/SIP1, DDX20/GEMIN3, GEMIN4, GEMIN5, GEMIN6, GEMIN7, GEMIN8 and STRAP/UNRIP. Part of the SMN-Sm complex that contains SMN1, GEMIN2/SIP1, DDX20/GEMIN3, GEMIN4, GEMIN5, GEMIN6, GEMIN7, GEMIN8, STRAP/UNRIP and the Sm proteins SNRPB, SNRPD1, SNRPD2, SNRPD3, SNRPE, SNRPF and SNRPG. Interacts with SMN1; the interaction is direct. Interacts with GEMIN4; the interaction is direct. Interacts with GEMIN5. Interacts with SNUPN; the interaction is direct. Interacts with PPP4R2. Interacts with FOXL2. Interacts with NANOS1 and PUM2.

It is found in the cytoplasm. It localises to the nucleus. The protein resides in the gem. The catalysed reaction is ATP + H2O = ADP + phosphate + H(+). It carries out the reaction a ribonucleoside 5'-triphosphate + H2O = a ribonucleoside 5'-diphosphate + phosphate + H(+). Functionally, the SMN complex catalyzes the assembly of small nuclear ribonucleoproteins (snRNPs), the building blocks of the spliceosome, and thereby plays an important role in the splicing of cellular pre-mRNAs. Most spliceosomal snRNPs contain a common set of Sm proteins SNRPB, SNRPD1, SNRPD2, SNRPD3, SNRPE, SNRPF and SNRPG that assemble in a heptameric protein ring on the Sm site of the small nuclear RNA to form the core snRNP (Sm core). In the cytosol, the Sm proteins SNRPD1, SNRPD2, SNRPE, SNRPF and SNRPG are trapped in an inactive 6S pICln-Sm complex by the chaperone CLNS1A that controls the assembly of the core snRNP. To assemble core snRNPs, the SMN complex accepts the trapped 5Sm proteins from CLNS1A forming an intermediate. Binding of snRNA inside 5Sm triggers eviction of the SMN complex, thereby allowing binding of SNRPD3 and SNRPB to complete assembly of the core snRNP. May also play a role in the metabolism of small nucleolar ribonucleoprotein (snoRNPs). The polypeptide is Probable ATP-dependent RNA helicase DDX20 (Ddx20) (Mus musculus (Mouse)).